The chain runs to 195 residues: Granulocyte colony-stimulating factor (195 aa).

A signal peptide spans 1–21 (MKLMVLQLLLWHSALWTVHEA). Cystine bridges form between Cys57–Cys63 and Cys85–Cys95. A glycan (O-linked (GalNAc...) threonine) is linked at Thr154.

The protein belongs to the IL-6 superfamily. As to quaternary structure, monomer. Post-translationally, O-glycosylated.

The protein resides in the secreted. Granulocyte/macrophage colony-stimulating factors are cytokines that act in hematopoiesis by controlling the production, differentiation, and function of 2 related white cell populations of the blood, the granulocytes and the monocytes-macrophages. This CSF induces granulocytes. This Bos taurus (Bovine) protein is Granulocyte colony-stimulating factor (CSF3).